A 434-amino-acid chain; its full sequence is UDP-N-acetylmuramoylalanine--D-glutamate ligase (434 aa).

117–123 (GTNGKST) contributes to the ATP binding site.

Belongs to the MurCDEF family.

The protein localises to the cytoplasm. It carries out the reaction UDP-N-acetyl-alpha-D-muramoyl-L-alanine + D-glutamate + ATP = UDP-N-acetyl-alpha-D-muramoyl-L-alanyl-D-glutamate + ADP + phosphate + H(+). Its pathway is cell wall biogenesis; peptidoglycan biosynthesis. In terms of biological role, cell wall formation. Catalyzes the addition of glutamate to the nucleotide precursor UDP-N-acetylmuramoyl-L-alanine (UMA). The protein is UDP-N-acetylmuramoylalanine--D-glutamate ligase of Sphingopyxis alaskensis (strain DSM 13593 / LMG 18877 / RB2256) (Sphingomonas alaskensis).